A 183-amino-acid chain; its full sequence is Ribosome-recycling factor (183 aa).

Belongs to the RRF family.

Its subcellular location is the cytoplasm. In terms of biological role, responsible for the release of ribosomes from messenger RNA at the termination of protein biosynthesis. May increase the efficiency of translation by recycling ribosomes from one round of translation to another. In Clostridium tetani (strain Massachusetts / E88), this protein is Ribosome-recycling factor.